The sequence spans 328 residues: Phosphate acyltransferase (328 aa).

It belongs to the PlsX family. Homodimer. Probably interacts with PlsY.

The protein localises to the cytoplasm. It carries out the reaction a fatty acyl-[ACP] + phosphate = an acyl phosphate + holo-[ACP]. Its pathway is lipid metabolism; phospholipid metabolism. Functionally, catalyzes the reversible formation of acyl-phosphate (acyl-PO(4)) from acyl-[acyl-carrier-protein] (acyl-ACP). This enzyme utilizes acyl-ACP as fatty acyl donor, but not acyl-CoA. The protein is Phosphate acyltransferase of Campylobacter jejuni subsp. jejuni serotype O:6 (strain 81116 / NCTC 11828).